The chain runs to 181 residues: Transcriptional repressor NrdR (181 aa).

Residues 3 to 34 (CPYCQHTDSRVLESRSTGAGRSIRRRRECLSC) fold into a zinc finger. Residues 49 to 139 (ISVIKRNGQS…VYRQFQGVDD (91 aa)) enclose the ATP-cone domain.

It belongs to the NrdR family. Requires Zn(2+) as cofactor.

Negatively regulates transcription of bacterial ribonucleotide reductase nrd genes and operons by binding to NrdR-boxes. The sequence is that of Transcriptional repressor NrdR from Picosynechococcus sp. (strain ATCC 27264 / PCC 7002 / PR-6) (Agmenellum quadruplicatum).